The following is a 547-amino-acid chain: Probable bifunctional tRNA threonylcarbamoyladenosine biosynthesis protein (547 aa).

Positions 1 to 329 are kae1; the sequence is MDTSKDLICI…YRSDMVEVNW (329 aa). 3 residues coordinate Fe cation: histidine 112, histidine 116, and tyrosine 133. L-threonylcarbamoyladenylate-binding positions include 133 to 137, aspartate 165, glycine 178, glutamate 182, and asparagine 262; that span reads YVSGG. Aspartate 290 contributes to the Fe cation binding site. A Protein kinase domain is found at 346–547; that stretch reads IIPEHLIGKG…KEVEKRARYL (202 aa). ATP contacts are provided by residues 352–360 and lysine 373; that span reads IGKGAEADI. The Proton acceptor; for kinase activity role is filled by aspartate 465.

This sequence in the N-terminal section; belongs to the KAE1 / TsaD family. It in the C-terminal section; belongs to the protein kinase superfamily. Tyr protein kinase family. BUD32 subfamily. Component of the KEOPS complex that consists of Kae1, Bud32, Cgi121 and Pcc1; the whole complex dimerizes. It depends on Fe(2+) as a cofactor.

It is found in the cytoplasm. The catalysed reaction is L-seryl-[protein] + ATP = O-phospho-L-seryl-[protein] + ADP + H(+). It catalyses the reaction L-threonyl-[protein] + ATP = O-phospho-L-threonyl-[protein] + ADP + H(+). The enzyme catalyses L-threonylcarbamoyladenylate + adenosine(37) in tRNA = N(6)-L-threonylcarbamoyladenosine(37) in tRNA + AMP + H(+). Its function is as follows. Required for the formation of a threonylcarbamoyl group on adenosine at position 37 (t(6)A37) in tRNAs that read codons beginning with adenine. Is a component of the KEOPS complex that is probably involved in the transfer of the threonylcarbamoyl moiety of threonylcarbamoyl-AMP (TC-AMP) to the N6 group of A37. The Kae1 domain likely plays a direct catalytic role in this reaction. The Bud32 domain probably displays kinase activity that regulates Kae1 function. This chain is Probable bifunctional tRNA threonylcarbamoyladenosine biosynthesis protein, found in Methanococcus maripaludis (strain C7 / ATCC BAA-1331).